The following is an 87-amino-acid chain: U3-theraphotoxin-Hhn1i (87 aa).

The signal sequence occupies residues methionine 1–alanine 24. A propeptide spanning residues serine 25–arginine 52 is cleaved from the precursor. Intrachain disulfides connect cysteine 54-cysteine 67, cysteine 61-cysteine 72, and cysteine 66-cysteine 79.

Belongs to the neurotoxin 10 (Hwtx-1) family. 51 (Hntx-8) subfamily. Hntx-8 sub-subfamily. As to expression, expressed by the venom gland.

The protein localises to the secreted. In terms of biological role, ion channel inhibitor. This Cyriopagopus hainanus (Chinese bird spider) protein is U3-theraphotoxin-Hhn1i.